Consider the following 367-residue polypeptide: 3-ketodihydrosphingosine reductase ksrA (367 aa).

A helical membrane pass occupies residues Ala-12 to Ser-32. Residues Gly-53, Ser-55, Gly-57, Arg-78, Lys-82, Asp-108, and Leu-109 each contribute to the NADPH site. The GXSXG motif lies at Gly-53–Gly-57. A helical membrane pass occupies residues Leu-193 to Pro-213. The active-site Proton acceptor is Tyr-211. NADP(+)-binding residues include Tyr-211, Lys-215, and Ile-259. The Lowers pKa of active site Tyr role is filled by Lys-215.

Belongs to the short-chain dehydrogenases/reductases (SDR) family.

It is found in the endoplasmic reticulum membrane. The enzyme catalyses sphinganine + NADP(+) = 3-oxosphinganine + NADPH + H(+). It participates in lipid metabolism; sphingolipid metabolism. In terms of biological role, catalyzes the reduction of 3'-oxosphinganine (3-ketodihydrosphingosine/KDS) to sphinganine (dihydrosphingosine/DHS), the second step of de novo sphingolipid biosynthesis. This is 3-ketodihydrosphingosine reductase ksrA from Aspergillus fumigatus (strain ATCC MYA-4609 / CBS 101355 / FGSC A1100 / Af293) (Neosartorya fumigata).